Consider the following 468-residue polypeptide: Alpha-2A adrenergic receptor (468 aa).

At M1–T48 the chain is on the extracellular side. Residues N25 and N29 are each glycosylated (N-linked (GlcNAc...) asparagine). Residues L49–F74 form a helical membrane-spanning segment. Residues T75–L85 are Cytoplasmic-facing. A helical membrane pass occupies residues F86–M111. Residues G112–C121 are Extracellular-facing. Cysteines 121 and 203 form a disulfide. The chain crosses the membrane as a helical span at residues E122–L144. Residues D145–R164 lie on the Cytoplasmic side of the membrane. The helical transmembrane segment at I165–E188 threads the bilayer. The Extracellular portion of the chain corresponds to K189–D207. Residues Q208–V232 form a helical membrane-spanning segment. The Cytoplasmic portion of the chain corresponds to R233 to F392. Disordered stretches follow at residues T242 to V279 and N291 to R381. Residues S315 to P332 show a composition bias toward basic and acidic residues. S348 carries the post-translational modification Phosphoserine. Over residues R351–P366 the composition is skewed to low complexity. The residue at position 370 (R370) is an Omega-N-methylarginine. Residues V393 to I417 form a helical membrane-spanning segment. Topologically, residues G418–K427 are extracellular. Residues F428 to N448 traverse the membrane as a helical segment. Residues H449 to V468 are Cytoplasmic-facing. A lipid anchor (S-palmitoyl cysteine) is attached at C460.

It belongs to the G-protein coupled receptor 1 family. Adrenergic receptor subfamily. ADRA2A sub-subfamily. Component of the ADA2A-containing complex (ATAC), composed of KAT14, KAT2A, TADA2L, TADA3L, ZZ3, MBIP, WDR5, YEATS2, CCDC101 and DR1. In terms of tissue distribution, retina, brain and olfactory lobe.

The protein resides in the cell membrane. Its function is as follows. Alpha-2 adrenergic receptors mediate the catecholamine-induced inhibition of adenylate cyclase through the action of G proteins. Component of the ATAC complex, a complex with histone acetyltransferase activity on histones H3 and H4. This Bos taurus (Bovine) protein is Alpha-2A adrenergic receptor.